Consider the following 432-residue polypeptide: Glutamate-1-semialdehyde 2,1-aminomutase 1 (432 aa).

The residue at position 268 (Lys268) is an N6-(pyridoxal phosphate)lysine.

It belongs to the class-III pyridoxal-phosphate-dependent aminotransferase family. HemL subfamily. Homodimer. The cofactor is pyridoxal 5'-phosphate.

Its subcellular location is the cytoplasm. The enzyme catalyses (S)-4-amino-5-oxopentanoate = 5-aminolevulinate. Its pathway is porphyrin-containing compound metabolism; protoporphyrin-IX biosynthesis; 5-aminolevulinate from L-glutamyl-tRNA(Glu): step 2/2. The sequence is that of Glutamate-1-semialdehyde 2,1-aminomutase 1 from Bacillus licheniformis (strain ATCC 14580 / DSM 13 / JCM 2505 / CCUG 7422 / NBRC 12200 / NCIMB 9375 / NCTC 10341 / NRRL NRS-1264 / Gibson 46).